The following is a 201-amino-acid chain: Superoxide dismutase [Mn] (201 aa).

Mn(2+) is bound by residues His27, His81, Asp163, and His167.

The protein belongs to the iron/manganese superoxide dismutase family. As to quaternary structure, homodimer. Mn(2+) is required as a cofactor.

It is found in the secreted. The catalysed reaction is 2 superoxide + 2 H(+) = H2O2 + O2. Functionally, destroys superoxide anion radicals which are normally produced within the cells and which are toxic to biological systems. This is Superoxide dismutase [Mn] (sodA) from Streptococcus pyogenes serotype M6 (strain ATCC BAA-946 / MGAS10394).